The following is a 360-amino-acid chain: Phenylalanine--tRNA ligase alpha subunit (360 aa).

Glu-260 is a Mg(2+) binding site.

The protein belongs to the class-II aminoacyl-tRNA synthetase family. Phe-tRNA synthetase alpha subunit type 1 subfamily. In terms of assembly, tetramer of two alpha and two beta subunits. It depends on Mg(2+) as a cofactor.

Its subcellular location is the cytoplasm. It carries out the reaction tRNA(Phe) + L-phenylalanine + ATP = L-phenylalanyl-tRNA(Phe) + AMP + diphosphate + H(+). The chain is Phenylalanine--tRNA ligase alpha subunit from Rhodopseudomonas palustris (strain BisB5).